Here is a 597-residue protein sequence, read N- to C-terminus: 2-succinyl-5-enolpyruvyl-6-hydroxy-3-cyclohexene-1-carboxylate synthase (597 aa).

The protein belongs to the TPP enzyme family. MenD subfamily. In terms of assembly, homodimer. Requires Mg(2+) as cofactor. The cofactor is Mn(2+). Thiamine diphosphate serves as cofactor.

It carries out the reaction isochorismate + 2-oxoglutarate + H(+) = 5-enolpyruvoyl-6-hydroxy-2-succinyl-cyclohex-3-ene-1-carboxylate + CO2. It participates in quinol/quinone metabolism; 1,4-dihydroxy-2-naphthoate biosynthesis; 1,4-dihydroxy-2-naphthoate from chorismate: step 2/7. The protein operates within cofactor biosynthesis; phylloquinone biosynthesis. In terms of biological role, catalyzes the thiamine diphosphate-dependent decarboxylation of 2-oxoglutarate and the subsequent addition of the resulting succinic semialdehyde-thiamine pyrophosphate anion to isochorismate to yield 2-succinyl-5-enolpyruvyl-6-hydroxy-3-cyclohexene-1-carboxylate (SEPHCHC). The polypeptide is 2-succinyl-5-enolpyruvyl-6-hydroxy-3-cyclohexene-1-carboxylate synthase (Synechococcus sp. (strain JA-3-3Ab) (Cyanobacteria bacterium Yellowstone A-Prime)).